The sequence spans 326 residues: Pyruvate dehydrogenase E1 component subunit alpha (326 aa).

In terms of assembly, heterodimer of an alpha and a beta chain. The cofactor is thiamine diphosphate.

It carries out the reaction N(6)-[(R)-lipoyl]-L-lysyl-[protein] + pyruvate + H(+) = N(6)-[(R)-S(8)-acetyldihydrolipoyl]-L-lysyl-[protein] + CO2. The pyruvate dehydrogenase complex catalyzes the overall conversion of pyruvate to acetyl-CoA and CO(2). It contains multiple copies of three enzymatic components: pyruvate dehydrogenase (E1), dihydrolipoamide acetyltransferase (E2) and lipoamide dehydrogenase (E3). In Rickettsia bellii (strain RML369-C), this protein is Pyruvate dehydrogenase E1 component subunit alpha (pdhA).